A 192-amino-acid polypeptide reads, in one-letter code: UPF0312 protein Pput_4854 (192 aa).

A signal peptide spans 1 to 23; the sequence is MLKKTFAALALGTALLSAGQAMA.

Belongs to the UPF0312 family. Type 1 subfamily.

The protein localises to the periplasm. The protein is UPF0312 protein Pput_4854 of Pseudomonas putida (strain ATCC 700007 / DSM 6899 / JCM 31910 / BCRC 17059 / LMG 24140 / F1).